The sequence spans 144 residues: 3-hydroxyacyl-[acyl-carrier-protein] dehydratase FabZ (144 aa).

Residue H48 is part of the active site.

Belongs to the thioester dehydratase family. FabZ subfamily.

Its subcellular location is the cytoplasm. It carries out the reaction a (3R)-hydroxyacyl-[ACP] = a (2E)-enoyl-[ACP] + H2O. In terms of biological role, involved in unsaturated fatty acids biosynthesis. Catalyzes the dehydration of short chain beta-hydroxyacyl-ACPs and long chain saturated and unsaturated beta-hydroxyacyl-ACPs. The chain is 3-hydroxyacyl-[acyl-carrier-protein] dehydratase FabZ from Bacillus pumilus (strain SAFR-032).